Reading from the N-terminus, the 142-residue chain is Large ribosomal subunit protein uL11 (142 aa).

It belongs to the universal ribosomal protein uL11 family. Part of the ribosomal stalk of the 50S ribosomal subunit. Interacts with L10 and the large rRNA to form the base of the stalk. L10 forms an elongated spine to which L12 dimers bind in a sequential fashion forming a multimeric L10(L12)X complex. One or more lysine residues are methylated.

Its function is as follows. Forms part of the ribosomal stalk which helps the ribosome interact with GTP-bound translation factors. This chain is Large ribosomal subunit protein uL11, found in Baumannia cicadellinicola subsp. Homalodisca coagulata.